Reading from the N-terminus, the 727-residue chain is Catalase-peroxidase (727 aa).

The tryptophyl-tyrosyl-methioninium (Trp-Tyr) (with M-244) cross-link spans 95-218 (WHSAGTYRII…LAAVQMGLIY (124 aa)). The Proton acceptor role is filled by H96. The tryptophyl-tyrosyl-methioninium (Tyr-Met) (with W-95) cross-link spans 218-244 (YVNPEGPNGEPDVLGAAKDIKESFGKM). Residue H259 participates in heme b binding.

It belongs to the peroxidase family. Peroxidase/catalase subfamily. In terms of assembly, homodimer or homotetramer. Heme b serves as cofactor. Post-translationally, formation of the three residue Trp-Tyr-Met cross-link is important for the catalase, but not the peroxidase activity of the enzyme.

It carries out the reaction H2O2 + AH2 = A + 2 H2O. The enzyme catalyses 2 H2O2 = O2 + 2 H2O. Its function is as follows. Bifunctional enzyme with both catalase and broad-spectrum peroxidase activity. The sequence is that of Catalase-peroxidase from Persephonella marina (strain DSM 14350 / EX-H1).